The primary structure comprises 942 residues: UvrABC system protein A (942 aa).

32-39 (GLSGSGKS) is a binding site for ATP. The segment at 251–278 (CPVCGFTVPELEPRLFSFNAPFGSCPTC) adopts a C4-type zinc-finger fold. ABC transporter domains lie at 308–589 (WNPI…KKSI) and 609–937 (GNGR…HYLK). 641-648 (GVSGSGKS) contacts ATP. Residues 740-766 (CEACSGDGIIKIEMHFLPDVYVPCEVC) form a C4-type zinc finger.

This sequence belongs to the ABC transporter superfamily. UvrA family. As to quaternary structure, forms a heterotetramer with UvrB during the search for lesions.

It is found in the cytoplasm. Functionally, the UvrABC repair system catalyzes the recognition and processing of DNA lesions. UvrA is an ATPase and a DNA-binding protein. A damage recognition complex composed of 2 UvrA and 2 UvrB subunits scans DNA for abnormalities. When the presence of a lesion has been verified by UvrB, the UvrA molecules dissociate. The chain is UvrABC system protein A from Streptococcus pyogenes serotype M3 (strain ATCC BAA-595 / MGAS315).